The sequence spans 286 residues: Urease accessory protein UreD 2 (286 aa).

Belongs to the UreD family. In terms of assembly, ureD, UreF and UreG form a complex that acts as a GTP-hydrolysis-dependent molecular chaperone, activating the urease apoprotein by helping to assemble the nickel containing metallocenter of UreC. The UreE protein probably delivers the nickel.

It localises to the cytoplasm. Its function is as follows. Required for maturation of urease via the functional incorporation of the urease nickel metallocenter. The sequence is that of Urease accessory protein UreD 2 from Bradyrhizobium sp. (strain ORS 278).